A 203-amino-acid chain; its full sequence is Holliday junction branch migration complex subunit RuvA (203 aa).

Residues 1–63 (MIDYLRGTLT…EDVIRLYGFR (63 aa)) are domain I. Residues 64–142 (TKEKRSLFEK…ELHPGLFSQK (79 aa)) form a domain II region. The flexible linker stretch occupies residues 143-152 (EEQPKPHEKN). The interval 153–203 (DGNQALDEAMEALKALGYVEKELKKVKPKLEQETLTTDAYIKKALQLMLNR) is domain III.

This sequence belongs to the RuvA family. In terms of assembly, homotetramer. Forms an RuvA(8)-RuvB(12)-Holliday junction (HJ) complex. HJ DNA is sandwiched between 2 RuvA tetramers; dsDNA enters through RuvA and exits via RuvB. An RuvB hexamer assembles on each DNA strand where it exits the tetramer. Each RuvB hexamer is contacted by two RuvA subunits (via domain III) on 2 adjacent RuvB subunits; this complex drives branch migration. In the full resolvosome a probable DNA-RuvA(4)-RuvB(12)-RuvC(2) complex forms which resolves the HJ.

The protein localises to the cytoplasm. The RuvA-RuvB-RuvC complex processes Holliday junction (HJ) DNA during genetic recombination and DNA repair, while the RuvA-RuvB complex plays an important role in the rescue of blocked DNA replication forks via replication fork reversal (RFR). RuvA specifically binds to HJ cruciform DNA, conferring on it an open structure. The RuvB hexamer acts as an ATP-dependent pump, pulling dsDNA into and through the RuvAB complex. HJ branch migration allows RuvC to scan DNA until it finds its consensus sequence, where it cleaves and resolves the cruciform DNA. The polypeptide is Holliday junction branch migration complex subunit RuvA (Halalkalibacterium halodurans (strain ATCC BAA-125 / DSM 18197 / FERM 7344 / JCM 9153 / C-125) (Bacillus halodurans)).